We begin with the raw amino-acid sequence, 114 residues long: Large ribosomal subunit protein P1 (114 aa).

The disordered stretch occupies residues 55 to 114; it reads EEAAAAPAAAPAASGSDDEAAADDGDDDEEADADEAAEAEDAGDDDDEEPSGEGLGDLFG. Low complexity predominate over residues 56 to 69; sequence EAAAAPAAAPAASG. Residues 70–105 show a composition bias toward acidic residues; the sequence is SDDEAAADDGDDDEEADADEAAEAEDAGDDDDEEPS.

The protein belongs to the eukaryotic ribosomal protein P1/P2 family. In terms of assembly, part of the 50S ribosomal subunit. Homodimer, it forms part of the ribosomal stalk which helps the ribosome interact with GTP-bound translation factors. Forms a heptameric uL10/P0(P1)2(P1)2(P1)2 complex, where uL10/P0 forms an elongated spine to which the P1 dimers bind in a sequential fashion.

Its function is as follows. Forms part of the ribosomal stalk, playing a central role in the interaction of the ribosome with GTP-bound translation factors. The sequence is that of Large ribosomal subunit protein P1 from Halobacterium salinarum (strain ATCC 700922 / JCM 11081 / NRC-1) (Halobacterium halobium).